We begin with the raw amino-acid sequence, 901 residues long: Modifier of cell death (901 aa).

Disordered regions lie at residues 147 to 169 (AQKR…PRAA) and 218 to 245 (PRKS…SPSP). A C2H2-type zinc finger spans residues 259–282 (FKCAECGDGFPVMDRLCDHMIKQH). 3 disordered regions span residues 494 to 528 (KKEH…DDVP), 682 to 717 (QERV…SHEE), and 779 to 901 (HKAI…WDDN). Over residues 817-828 (EAAAKLIQAENE) the composition is skewed to low complexity. A compositionally biased stretch (acidic residues) spans 829-840 (MVVEEEEVEEPP). Over residues 846-866 (QVPKEKEVEVAEAEKLPEQVK) the composition is skewed to basic and acidic residues.

Its function is as follows. Promotes programmed cell death. Its role in programmed cell death may be in conjunction with cell cycle regulatory factor efl-1 and the synthetic multivulva class B proteins dpl-1 and lin-35, and is independent of the ced-1, ced-8 and ced-9 pathways. The protein is Modifier of cell death of Caenorhabditis elegans.